The following is a 153-amino-acid chain: ORM1-like protein 2 (153 aa).

Residues 1 to 21 (MNVGVAHSEVNPNTRVMNSRG) are Cytoplasmic-facing. 2 helical membrane passes run 22-42 (IWLA…SIPF) and 43-63 (FSIP…MYIF). Residues 64 to 105 (LHTVKGTPFETPDQGKARLLTHWEQMDYGLQFTSSRKFLSIS) are Cytoplasmic-facing. The helical transmembrane segment at 106–126 (PIVLYLLASFYTKYDAAHFLI) threads the bilayer. Residues 127 to 153 (NTASLLSVLLPKLPQFHGVRLFGINKY) are Extracellular-facing.

The protein belongs to the ORM family. As to quaternary structure, ceramide-sensitive subunit of the serine palmitoyltransferase (SPT) complex, which is also composed of SPTLC1, SPTLC2/3 and SPTSSA/B.

The protein resides in the endoplasmic reticulum membrane. Plays an essential role in the homeostatic regulation of sphingolipid de novo biosynthesis by modulating the activity of the serine palmitoyltransferase (SPT) in response to ceramide levels. When complexed to SPT, the binding of ceramides to its N-terminus stabilizes a conformation that block SPT substrate entry, hence preventing SPT catalytic activity. Through this mechanism, maintains ceramide levels at sufficient concentrations for the production of complex sphingolipids, but which prevents the accumulation of ceramides to levels that trigger apoptosis. The polypeptide is ORM1-like protein 2 (Ormdl2) (Mus musculus (Mouse)).